The chain runs to 166 residues: RNA pyrophosphohydrolase (166 aa).

The 151-residue stretch at 8-158 folds into the Nudix hydrolase domain; it reads PYRSCVGMML…KRPVYERVVK (151 aa). The short motif at 47 to 68 is the Nudix box element; sequence GGIDPGEDYWEAAQRELLEETN.

The protein belongs to the Nudix hydrolase family. RppH subfamily. Requires a divalent metal cation as cofactor.

Accelerates the degradation of transcripts by removing pyrophosphate from the 5'-end of triphosphorylated RNA, leading to a more labile monophosphorylated state that can stimulate subsequent ribonuclease cleavage. The protein is RNA pyrophosphohydrolase of Afipia carboxidovorans (strain ATCC 49405 / DSM 1227 / KCTC 32145 / OM5) (Oligotropha carboxidovorans).